The chain runs to 552 residues: Cholesterol oxidase (552 aa).

Positions 1–45 (MTDSRANRADATRGVASVSRRRFLAGAGLTAGAIALSSMSTSASA) form a signal peptide, tat-type signal. FAD is bound by residues Y66, G67, E86, G160, N164, G165, M167, and V295. Catalysis depends on proton acceptor residues E406 and H492. Residues G520 and F532 each coordinate FAD.

The protein belongs to the GMC oxidoreductase family. FAD serves as cofactor. In terms of processing, predicted to be exported by the Tat system. The position of the signal peptide cleavage has been experimentally proven.

Its subcellular location is the secreted. The enzyme catalyses cholesterol + O2 = cholest-5-en-3-one + H2O2. It carries out the reaction cholest-5-en-3-one = cholest-4-en-3-one. It functions in the pathway steroid metabolism; cholesterol degradation. In terms of biological role, bifunctional enzyme that catalyzes the oxidation and isomerization of cholesterol to cholestenone (cholest-4-en-3-one), an initial step in the cholesterol degradation process. This Brevibacterium sterolicum protein is Cholesterol oxidase.